The sequence spans 234 residues: MDKIYAIIPVNQFANAKTRLSPFLTPEERRDLLKAMLKDITDTLKPIVDKVVIISRDEEVLAYAEELELTTIVEEEYKKSKAVNSSDDNPLNKALKQAMKWSRKKTRKVIILPSDIPLIGKTNVKLLIDQAKNFDFIIVPSKGGGTNTLIIKPLAIDMKFEGFSFNKHIEEAKRKKLVPIVHDSFYMALDVNTTEDLGEIMLHGNGTETKKYLESLGIKVESSHDHERLKVTRD.

Belongs to the CofC family. In terms of assembly, homodimer.

The catalysed reaction is (2S)-2-phospholactate + GTP + H(+) = (2S)-lactyl-2-diphospho-5'-guanosine + diphosphate. It functions in the pathway cofactor biosynthesis; coenzyme F420 biosynthesis. Functionally, guanylyltransferase that catalyzes the activation of (2S)-2-phospholactate (2-PL) as (2S)-lactyl-2-diphospho-5'-guanosine, via the condensation of 2-PL with GTP. It is involved in the biosynthesis of coenzyme F420, a hydride carrier cofactor. In Methanobrevibacter ruminantium (strain ATCC 35063 / DSM 1093 / JCM 13430 / OCM 146 / M1) (Methanobacterium ruminantium), this protein is 2-phospho-L-lactate guanylyltransferase.